The chain runs to 402 residues: 26S proteasome regulatory subunit 8 (402 aa).

186 to 193 is a binding site for ATP; the sequence is GPPGTGKT.

This sequence belongs to the AAA ATPase family.

It localises to the cytoplasm. The protein localises to the nucleus. Functionally, the 26S proteasome is involved in the ATP-dependent degradation of ubiquitinated proteins. The regulatory (or ATPase) complex confers ATP dependency and substrate specificity to the 26S complex. This Manduca sexta (Tobacco hawkmoth) protein is 26S proteasome regulatory subunit 8.